A 166-amino-acid chain; its full sequence is MAHIEKQAGELQEKLIAVNRVSKTVKGGRIFSFTALTVVGDGNGRVGFGYGKAREVPAAIQKAMEKARRNMMNVALNSGTLQHPVKGAHTGSRVFMQPASEGTGIIAGGAMXXXXXXXXXXXXXXXAYGSTNPINVVRATIDALANMKSPEMVAAKLGKSVADILG.

Residues 11–74 enclose the S5 DRBM domain; it reads LQEKLIAVNR…EKARRNMMNV (64 aa).

Belongs to the universal ribosomal protein uS5 family. In terms of assembly, part of the 30S ribosomal subunit. Contacts proteins S4 and S8.

Functionally, with S4 and S12 plays an important role in translational accuracy. Located at the back of the 30S subunit body where it stabilizes the conformation of the head with respect to the body. In Buchnera aphidicola subsp. Acyrthosiphon kondoi (Acyrthosiphon kondoi symbiotic bacterium), this protein is Small ribosomal subunit protein uS5.